A 193-amino-acid polypeptide reads, in one-letter code: Protein SPEAR3 (193 aa).

2 disordered regions span residues M1 to Q50 and G85 to P104. Residues S14 to P26 show a composition bias toward low complexity. The SPL motif lies at R44–E52. The segment covering Y86 to S101 has biased composition (low complexity). Residues L187 to L193 carry the EAR motif.

In terms of assembly, interacts with TPL and the TPR corepressors TPR1, TPR2, TPR3, TPR4, and with the TCP transcription factors TCP2, TCP3, TCP4, TCP5, TCP10, TCP13, TCP17 and TCP24. Interacts with SPL and SPEAR2. In terms of tissue distribution, expressed in shoot apical meristem, cotyledons and leaves. Detected at the leaf margins and in the vascular bundles at the base of the leaves.

It localises to the nucleus. In terms of biological role, transcriptional regulator of leaf development. Acts as an adapter-like transcriptional repressor recruiting TPL/TPR corepressors to inhibit the CIN-like TCP transcription factors. In Arabidopsis thaliana (Mouse-ear cress), this protein is Protein SPEAR3.